The primary structure comprises 223 residues: UPF0441 protein YgiB (223 aa).

The segment covering 178-195 (TVPKTAMAPKPATTTTVT) has biased composition (low complexity). Residues 178-223 (TVPKTAMAPKPATTTTVTRGGFGESVAKQSTLQRSATGTSSRSMGG) are disordered. A compositionally biased stretch (polar residues) spans 204 to 223 (AKQSTLQRSATGTSSRSMGG).

Belongs to the UPF0441 family.

In Escherichia coli (strain ATCC 8739 / DSM 1576 / NBRC 3972 / NCIMB 8545 / WDCM 00012 / Crooks), this protein is UPF0441 protein YgiB.